A 249-amino-acid chain; its full sequence is Coproheme decarboxylase (249 aa).

Fe-coproporphyrin III-binding positions include Arg-131, 145–149 (YPMDK), His-172, and Gln-185. Residue Tyr-145 is part of the active site.

It belongs to the ChdC family. Type 1 subfamily. The cofactor is Fe-coproporphyrin III.

The catalysed reaction is Fe-coproporphyrin III + 2 H2O2 + 2 H(+) = heme b + 2 CO2 + 4 H2O. It catalyses the reaction Fe-coproporphyrin III + H2O2 + H(+) = harderoheme III + CO2 + 2 H2O. The enzyme catalyses harderoheme III + H2O2 + H(+) = heme b + CO2 + 2 H2O. It functions in the pathway porphyrin-containing compound metabolism; protoheme biosynthesis. In terms of biological role, involved in coproporphyrin-dependent heme b biosynthesis. Catalyzes the decarboxylation of Fe-coproporphyrin III (coproheme) to heme b (protoheme IX), the last step of the pathway. The reaction occurs in a stepwise manner with a three-propionate intermediate. The protein is Coproheme decarboxylase of Staphylococcus haemolyticus (strain JCSC1435).